The sequence spans 64 residues: Large ribosomal subunit protein bL28 (64 aa).

Belongs to the bacterial ribosomal protein bL28 family.

The chain is Large ribosomal subunit protein bL28 from Syntrophobacter fumaroxidans (strain DSM 10017 / MPOB).